The sequence spans 259 residues: Phosphatidylglycerol--prolipoprotein diacylglyceryl transferase (259 aa).

A run of 4 helical transmembrane segments spans residues 9 to 29, 55 to 75, 92 to 112, and 117 to 137; these read IIFSIGPLAVSWYSLSYVVGI, FITYAVIGIIVGGRLGFVLLY, EGGMSFHGGALGVIIAAYLFC, and INFLSLTDIIAPVVPIGLFLG. A 1,2-diacyl-sn-glycero-3-phospho-(1'-sn-glycerol) is bound at residue arginine 138. 3 helical membrane-spanning segments follow: residues 172 to 192, 201 to 221, and 228 to 248; these read QLYEAFFEGLVLFCILAYATF, GLNSGIFLIFYALFRIAIEIF, and IGFILDSLTMGQILSVPMLLL.

The protein belongs to the Lgt family.

The protein resides in the cell inner membrane. The catalysed reaction is L-cysteinyl-[prolipoprotein] + a 1,2-diacyl-sn-glycero-3-phospho-(1'-sn-glycerol) = an S-1,2-diacyl-sn-glyceryl-L-cysteinyl-[prolipoprotein] + sn-glycerol 1-phosphate + H(+). It participates in protein modification; lipoprotein biosynthesis (diacylglyceryl transfer). Catalyzes the transfer of the diacylglyceryl group from phosphatidylglycerol to the sulfhydryl group of the N-terminal cysteine of a prolipoprotein, the first step in the formation of mature lipoproteins. The polypeptide is Phosphatidylglycerol--prolipoprotein diacylglyceryl transferase (Rickettsia felis (strain ATCC VR-1525 / URRWXCal2) (Rickettsia azadi)).